The following is a 220-amino-acid chain: Putative phosphatase YhcW (220 aa).

D8 (nucleophile) is an active-site residue. Residues D8, D10, and D166 each contribute to the a divalent metal cation site. The active-site Proton donor is the D10.

This sequence belongs to the HAD-like hydrolase superfamily. CbbY/CbbZ/Gph/YieH family. It depends on a divalent metal cation as a cofactor.

The sequence is that of Putative phosphatase YhcW (yhcW) from Bacillus subtilis (strain 168).